Here is a 479-residue protein sequence, read N- to C-terminus: Alpha,alpha-trehalose-phosphate synthase [UDP-forming] 2 (479 aa).

D-glucose 6-phosphate-binding residues include tyrosine 96 and aspartate 150. UDP contacts are provided by arginine 287 and lysine 292. 2 residues coordinate UDP-alpha-D-glucose: arginine 287 and lysine 292. Arginine 325 is a D-glucose 6-phosphate binding site. UDP is bound by residues 363 to 364 (SV) and 390 to 394 (LVSFE). 386–394 (DGMNLVSFE) contacts UDP-alpha-D-glucose.

Belongs to the glycosyltransferase 20 family.

It catalyses the reaction D-glucose 6-phosphate + UDP-alpha-D-glucose = alpha,alpha-trehalose 6-phosphate + UDP + H(+). The protein operates within carbohydrate biosynthesis. Synthase catalytic subunit of the trehalose synthase complex that catalyzes the production of trehalose from glucose-6-phosphate and UDP-alpha-D-glucose in a two step process. The disaccharide trehalose serves as a storage carbohydrate that is mobilized during conidial germination. Regulates the level of trehalose as a protectant for cell integrity during thermal and oxidative stress. This chain is Alpha,alpha-trehalose-phosphate synthase [UDP-forming] 2, found in Aspergillus fumigatus (strain ATCC MYA-4609 / CBS 101355 / FGSC A1100 / Af293) (Neosartorya fumigata).